The chain runs to 109 residues: Small ribosomal subunit protein uS17 (109 aa).

Belongs to the universal ribosomal protein uS17 family. Part of the 30S ribosomal subunit.

One of the primary rRNA binding proteins, it binds specifically to the 5'-end of 16S ribosomal RNA. The chain is Small ribosomal subunit protein uS17 from Halobacterium salinarum (strain ATCC 29341 / DSM 671 / R1).